The chain runs to 273 residues: Ribonuclease PH (273 aa).

Phosphate is bound by residues Arg-86 and 124–126; that span reads GTR. The interval 254-273 is disordered; that stretch reads GHQEPGEGAGVSLAPGGGGL.

It belongs to the RNase PH family. As to quaternary structure, homohexameric ring arranged as a trimer of dimers.

The enzyme catalyses tRNA(n+1) + phosphate = tRNA(n) + a ribonucleoside 5'-diphosphate. Functionally, phosphorolytic 3'-5' exoribonuclease that plays an important role in tRNA 3'-end maturation. Removes nucleotide residues following the 3'-CCA terminus of tRNAs; can also add nucleotides to the ends of RNA molecules by using nucleoside diphosphates as substrates, but this may not be physiologically important. Probably plays a role in initiation of 16S rRNA degradation (leading to ribosome degradation) during starvation. The protein is Ribonuclease PH of Symbiobacterium thermophilum (strain DSM 24528 / JCM 14929 / IAM 14863 / T).